A 269-amino-acid polypeptide reads, in one-letter code: 4-chlorobenzoyl coenzyme A dehalogenase (269 aa).

Residues arginine 24 and 62-67 (AGFYLR) contribute to the substrate site. The Proton acceptor role is filled by histidine 90. Residue glycine 114 participates in substrate binding. The active-site Nucleophile is aspartate 145. A substrate-binding site is contributed by arginine 257.

It belongs to the enoyl-CoA hydratase/isomerase family. Homotetramer. Homotetramer, homooctamer and larger multimers. Homotrimer.

It catalyses the reaction 4-chlorobenzoyl-CoA + H2O = 4-hydroxybenzoyl-CoA + chloride + H(+). Its pathway is xenobiotic degradation; 4-chlorobenzoate degradation; 4-hydroxybenzoate from 4-chlorobenzoate: step 2/3. Its activity is regulated as follows. Inactivated by 1 mM Ag(+) and by 5 mM Cu(2+). Partially inhibited by 5 mM Zn(2+), Mn(2+), Co(2+), Fe(2+) and Ni(2+). Unaffected by 10 mM Na(+), K(+) and Li(+) and by 0.5 mM Mg(2+), Mn(2+), Fe(2+), Ca(2+), Co(2+) and Zn(2+). Inhibited by the sulfhydryl blocking agent 5,5'-dithio-bis-(2-nitrobenzoate), SDS and N-bromosuccinimide. Unaffected by sodium azide and EDTA. Inactivated following treatment with diethyl pyrocarbonate; this inactivation is reversible by treatment with hydroxylamine. Its function is as follows. Dehalogenates 4-chlorobenzoyl-CoA, 4-iodobenzoyl-CoA and 4-bromobenzoyl-CoA, but not 4-fluorobenzoyl-CoA. Inactive towards crotonyl-CoA, alpha-methylcrotonyl-CoA and beta-methylcrotonyl-CoA. The polypeptide is 4-chlorobenzoyl coenzyme A dehalogenase (Pseudomonas sp. (strain CBS-3)).